A 477-amino-acid chain; its full sequence is Kinesin-like protein KIN-1 (477 aa).

The Kinesin motor domain maps to 3 to 330 (NVTVCVRFRP…VRFGTRTKLI (328 aa)). 86 to 93 (GQTGAGKT) is an ATP binding site. The stretch at 402–451 (QDAASQEVSLLTQAVEELKETVEELTDENERLRGELELAQEAAAAAAAAR) forms a coiled coil.

This sequence belongs to the TRAFAC class myosin-kinesin ATPase superfamily. Kinesin family. KIN-1 subfamily. Widely expressed. Expressed in young roots and leaves, in mature roots, culm, sheath and leaves, and in panicles at various developmental stages. Strongest expression is detected in panicles. In the panicle, expression is detected in anthers, glumme, lemma and palea. In the spikelet, expression is detected in both microsporocyte and the anther walls.

It is found in the cytoplasm. Its function is as follows. Kinesin-like motor protein that exhibits microtubule-stimulated ATPase activity. Plays an essential role in male meiotic chromosomal dynamics, male gametogenesis and anther dehiscence. May play a minor and nonessential role in regulating meiotic spindle formation. The protein is Kinesin-like protein KIN-1 of Oryza sativa subsp. japonica (Rice).